Reading from the N-terminus, the 70-residue chain is NADH dehydrogenase [ubiquinone] 1 alpha subcomplex subunit 1 (70 aa).

Residues 1 to 21 (MWFEILPGLAIMGVCLVIPGV) form a helical membrane-spanning segment.

The protein belongs to the complex I NDUFA1 subunit family. In terms of assembly, complex I is composed of 45 different subunits.

The protein resides in the mitochondrion inner membrane. Accessory subunit of the mitochondrial membrane respiratory chain NADH dehydrogenase (Complex I), that is believed not to be involved in catalysis. Complex I functions in the transfer of electrons from NADH to the respiratory chain. The immediate electron acceptor for the enzyme is believed to be ubiquinone. This Mus musculus (Mouse) protein is NADH dehydrogenase [ubiquinone] 1 alpha subcomplex subunit 1 (Ndufa1).